The sequence spans 366 residues: 3-dehydroquinate synthase (366 aa).

Residues 69–74, 103–107, 127–128, Lys140, and Lys149 contribute to the NAD(+) site; these read DGEAFK, GVIGD, and TT. Zn(2+) is bound by residues Glu182, His245, and His262.

The protein belongs to the sugar phosphate cyclases superfamily. Dehydroquinate synthase family. The cofactor is Co(2+). Zn(2+) is required as a cofactor. It depends on NAD(+) as a cofactor.

It localises to the cytoplasm. The enzyme catalyses 7-phospho-2-dehydro-3-deoxy-D-arabino-heptonate = 3-dehydroquinate + phosphate. It participates in metabolic intermediate biosynthesis; chorismate biosynthesis; chorismate from D-erythrose 4-phosphate and phosphoenolpyruvate: step 2/7. Functionally, catalyzes the conversion of 3-deoxy-D-arabino-heptulosonate 7-phosphate (DAHP) to dehydroquinate (DHQ). This is 3-dehydroquinate synthase from Pseudomonas fluorescens (strain Pf0-1).